A 268-amino-acid chain; its full sequence is 4-hydroxy-tetrahydrodipicolinate reductase (268 aa).

Residue 8–13 (GAAGRM) participates in NAD(+) binding. Residue R36 participates in NADP(+) binding. Residues 99–101 (GTT) and 123–126 (AANF) contribute to the NAD(+) site. The active-site Proton donor/acceptor is the H156. Position 157 (H157) interacts with (S)-2,3,4,5-tetrahydrodipicolinate. K160 acts as the Proton donor in catalysis. 166–167 (GT) is a (S)-2,3,4,5-tetrahydrodipicolinate binding site.

Belongs to the DapB family.

It is found in the cytoplasm. It carries out the reaction (S)-2,3,4,5-tetrahydrodipicolinate + NAD(+) + H2O = (2S,4S)-4-hydroxy-2,3,4,5-tetrahydrodipicolinate + NADH + H(+). The enzyme catalyses (S)-2,3,4,5-tetrahydrodipicolinate + NADP(+) + H2O = (2S,4S)-4-hydroxy-2,3,4,5-tetrahydrodipicolinate + NADPH + H(+). Its pathway is amino-acid biosynthesis; L-lysine biosynthesis via DAP pathway; (S)-tetrahydrodipicolinate from L-aspartate: step 4/4. Its function is as follows. Catalyzes the conversion of 4-hydroxy-tetrahydrodipicolinate (HTPA) to tetrahydrodipicolinate. This chain is 4-hydroxy-tetrahydrodipicolinate reductase, found in Pseudomonas fluorescens (strain Pf0-1).